Consider the following 147-residue polypeptide: MMQICDSYNQKNSLFNAMNRFIGAVNNMDQTVMVPSLLRDVPLDQEEEKEVTSFQDGDMYGSYVLLKSIRNDIEWGVLQAEERRKEKHGVTTTSLEVSRIEPNDKDLEKLFHYHLSGLHTVLAKLTRKANTLTNRYKQEIGIGGCGN.

This sequence belongs to the SPOT14 family.

Its subcellular location is the nucleus. The protein localises to the cytoplasm. The protein resides in the cytoskeleton. In terms of biological role, involved in stabilization of microtubules. May play a role in the regulation of lipogenesis. The chain is Mid1-interacting protein 1-B from Danio rerio (Zebrafish).